Here is a 168-residue protein sequence, read N- to C-terminus: DOMON domain-containing protein CBG21753 (168 aa).

The signal sequence occupies residues 1–17; it reads MIKSMILVALILAFASA. One can recognise a DOMON domain in the interval 25–143; sequence SGFQSYWRFA…CQKWRWIKSG (119 aa). 2 N-linked (GlcNAc...) asparagine glycosylation sites follow: Asn-35 and Asn-94. Positions 148 to 168 are disordered; that stretch reads GQLTRNSKSPKDKKVCPMECN. A compositionally biased stretch (basic and acidic residues) spans 156 to 168; that stretch reads SPKDKKVCPMECN.

It is found in the secreted. This is DOMON domain-containing protein CBG21753 from Caenorhabditis briggsae.